Consider the following 343-residue polypeptide: Anthranilate phosphoribosyltransferase (343 aa).

Residues G79, 82–83 (GD), T87, 89–92 (NVST), 106–114 (KHGNRAASS), and S118 contribute to the 5-phospho-alpha-D-ribose 1-diphosphate site. G79 is an anthranilate binding site. S91 serves as a coordination point for Mg(2+). Residue N109 coordinates anthranilate. R164 contributes to the anthranilate binding site. 2 residues coordinate Mg(2+): D223 and E224.

It belongs to the anthranilate phosphoribosyltransferase family. Homodimer. Requires Mg(2+) as cofactor.

It carries out the reaction N-(5-phospho-beta-D-ribosyl)anthranilate + diphosphate = 5-phospho-alpha-D-ribose 1-diphosphate + anthranilate. The protein operates within amino-acid biosynthesis; L-tryptophan biosynthesis; L-tryptophan from chorismate: step 2/5. In terms of biological role, catalyzes the transfer of the phosphoribosyl group of 5-phosphorylribose-1-pyrophosphate (PRPP) to anthranilate to yield N-(5'-phosphoribosyl)-anthranilate (PRA). The protein is Anthranilate phosphoribosyltransferase of Metallosphaera sedula (strain ATCC 51363 / DSM 5348 / JCM 9185 / NBRC 15509 / TH2).